Reading from the N-terminus, the 92-residue chain is MPFVPVETPKCPACGKSVYAAEERVAGGYKFHKTCFKCSMCNKALDSTNCTEHEKELFCKNCHGRKYGPKGYGFGGGAGCLSTDTGAHLNRE.

Residues 11-62 (CPACGKSVYAAEERVAGGYKFHKTCFKCSMCNKALDSTNCTEHEKELFCKNC) form the LIM zinc-binding domain. The Nuclear localization signal motif lies at 65–70 (RKYGPK).

In the embryo, expression is restricted to the somatic, visceral, and pharyngeal muscles. Within the somatic musculature, MLP60 is distributed throughout the muscle fibers. There is no expression in cardiac mesoderm or in fat body.

Its subcellular location is the cytoplasm. The protein localises to the nucleus. Positive regulator of myogenesis. This Drosophila melanogaster (Fruit fly) protein is Muscle LIM protein 1 (Mlp60A).